The sequence spans 582 residues: Probable DNA ligase (582 aa).

Residue Glu243 coordinates ATP. The active-site N6-AMP-lysine intermediate is Lys245. 6 residues coordinate ATP: Arg250, Arg265, Glu295, Phe335, Arg410, and Lys416.

It belongs to the ATP-dependent DNA ligase family. Requires Mg(2+) as cofactor.

It carries out the reaction ATP + (deoxyribonucleotide)n-3'-hydroxyl + 5'-phospho-(deoxyribonucleotide)m = (deoxyribonucleotide)n+m + AMP + diphosphate.. Its function is as follows. DNA ligase that seals nicks in double-stranded DNA during DNA replication, DNA recombination and DNA repair. In Dictyoglomus thermophilum (strain ATCC 35947 / DSM 3960 / H-6-12), this protein is Probable DNA ligase.